We begin with the raw amino-acid sequence, 340 residues long: Immunoglobulin-binding protein 1 (340 aa).

A UIM domain is found at 47–61 (LELLEKAAGMLSQLD). An interaction with PPP2CA region spans residues 99–203 (RLDHLQRARE…YLLHLRRWIG (105 aa)). 2 disordered regions span residues 221–242 (DKDS…PPMK) and 281–340 (LPDR…QNMG). The tract at residues 226–291 (REESACQSSL…PDRGIAKPPS (66 aa)) is interaction with MID1. N6-acetyllysine is present on Lys-242. Residues 292–301 (ADFQRAAQQQ) are compositionally biased toward low complexity. Residues 302-312 (EDQEQKDEENE) are compositionally biased toward acidic residues. The segment covering 313-330 (EKALHRMREWDDWKDTHP) has biased composition (basic and acidic residues).

The protein belongs to the IGBP1/TAP42 family. Interacts with partially folded PPP2CA, but not with the fully active protein. Interacts with PPP2CB, and with PP4 and PP6. Interacts with MID1 and MID2. Interacts with ubiquitin. Phosphorylated. Post-translationally, monoubiquitination by MID1 triggers calpain-mediated cleavage and switches IGBP1 activity from protective to destructive.

It is found in the cytoplasm. Associated to surface IgM-receptor; may be involved in signal transduction. Involved in regulation of the catalytic activity of the phosphatases PP2A, PP4 and PP6 by protecting their partially folded catalytic subunits from degradative polyubiquitination until they associate with regulatory subunits. The polypeptide is Immunoglobulin-binding protein 1 (Igbp1) (Rattus norvegicus (Rat)).